Here is a 97-residue protein sequence, read N- to C-terminus: Citrate lyase acyl carrier protein (97 aa).

Position 14 is an O-(phosphoribosyl dephospho-coenzyme A)serine (S14).

This sequence belongs to the CitD family. Oligomer with a subunit composition of (alpha,beta,gamma)6.

Its subcellular location is the cytoplasm. Covalent carrier of the coenzyme of citrate lyase. The sequence is that of Citrate lyase acyl carrier protein from Leuconostoc citreum (strain KM20).